Consider the following 103-residue polypeptide: UPF0102 protein aq_041 (103 aa).

This sequence belongs to the UPF0102 family.

This chain is UPF0102 protein aq_041, found in Aquifex aeolicus (strain VF5).